A 582-amino-acid chain; its full sequence is ATP-dependent lipid A-core flippase (582 aa).

5 helical membrane-spanning segments follow: residues A25 to L45, L69 to I89, A137 to M159, P253 to P273, and V275 to M295. In terms of domain architecture, ABC transmembrane type-1 spans I28–R310. An ABC transporter domain is found at I342–M578. An ATP-binding site is contributed by G376–S383.

It belongs to the ABC transporter superfamily. Lipid exporter (TC 3.A.1.106) family. Homodimer.

The protein localises to the cell inner membrane. It catalyses the reaction ATP + H2O + lipid A-core oligosaccharideSide 1 = ADP + phosphate + lipid A-core oligosaccharideSide 2.. Functionally, involved in lipopolysaccharide (LPS) biosynthesis. Translocates lipid A-core from the inner to the outer leaflet of the inner membrane. Transmembrane domains (TMD) form a pore in the inner membrane and the ATP-binding domain (NBD) is responsible for energy generation. In Yersinia pestis bv. Antiqua (strain Antiqua), this protein is ATP-dependent lipid A-core flippase.